The sequence spans 274 residues: Methionine aminopeptidase B (274 aa).

Histidine 102 lines the substrate pocket. A divalent metal cation contacts are provided by aspartate 120, aspartate 131, and histidine 194. Histidine 201 serves as a coordination point for substrate. A divalent metal cation is bound by residues glutamate 227 and glutamate 258.

This sequence belongs to the peptidase M24A family. Methionine aminopeptidase type 1 subfamily. Monomer. The cofactor is Co(2+). Zn(2+) is required as a cofactor. Requires Mn(2+) as cofactor. It depends on Fe(2+) as a cofactor.

It carries out the reaction Release of N-terminal amino acids, preferentially methionine, from peptides and arylamides.. Removes the N-terminal methionine from nascent proteins. The N-terminal methionine is often cleaved when the second residue in the primary sequence is small and uncharged (Met-Ala-, Cys, Gly, Pro, Ser, Thr, or Val). Requires deformylation of the N(alpha)-formylated initiator methionine before it can be hydrolyzed. In Synechocystis sp. (strain ATCC 27184 / PCC 6803 / Kazusa), this protein is Methionine aminopeptidase B.